The primary structure comprises 99 residues: Malonate decarboxylase acyl carrier protein (99 aa).

The residue at position 25 (Ser-25) is an O-(phosphoribosyl dephospho-coenzyme A)serine.

Belongs to the MdcC family. Post-translationally, covalently binds the prosthetic group of malonate decarboxylase.

Its subcellular location is the cytoplasm. Its function is as follows. Subunit of malonate decarboxylase, it is an acyl carrier protein to which acetyl and malonyl thioester residues are bound via a 2'-(5''-phosphoribosyl)-3'-dephospho-CoA prosthetic group and turn over during the catalytic mechanism. In Azotobacter vinelandii (strain DJ / ATCC BAA-1303), this protein is Malonate decarboxylase acyl carrier protein.